A 203-amino-acid chain; its full sequence is Glutathione S-transferase (203 aa).

Residues 2–79 (PDYKVYYFNV…YLANQVGLAG (78 aa)) form the GST N-terminal domain. Residues Y8, W39, K43, 49 to 51 (GQM), and 63 to 64 (QS) contribute to the glutathione site. Residues 81 to 203 (DDWENLMIDT…YIAKRPITEV (123 aa)) enclose the GST C-terminal domain.

The protein belongs to the GST superfamily. Sigma family. As to quaternary structure, homodimer.

It carries out the reaction RX + glutathione = an S-substituted glutathione + a halide anion + H(+). Its function is as follows. Conjugation of reduced glutathione to a wide number of exogenous and endogenous hydrophobic electrophiles. This Anopheles gambiae (African malaria mosquito) protein is Glutathione S-transferase (GstS1).